Consider the following 338-residue polypeptide: Activator of 90 kDa heat shock protein ATPase homolog 1 (338 aa).

Lys3 carries the post-translational modification N6-acetyllysine. Lys182 is covalently cross-linked (Glycyl lysine isopeptide (Lys-Gly) (interchain with G-Cter in SUMO1)). A Phosphoserine modification is found at Ser193. A Glycyl lysine isopeptide (Lys-Gly) (interchain with G-Cter in SUMO2) cross-link involves residue Lys203. An N6-acetyllysine modification is found at Lys212. Residue Tyr223 is modified to Phosphotyrosine; by ABL. Ser258 bears the Phosphoserine mark.

This sequence belongs to the AHA1 family. As to quaternary structure, interacts with HSPCA/HSP90. Interacts (phosphorylated on Tyr-223) with HSP90AA1; the interaction activates HSP90AA1 ATPase activity. Interacts with HSP90AB1. Interacts with GCH1. Interacts with SRPK1. Interacts with FLCN. (Microbial infection) Interacts with vesicular stomatitis virus glycoprotein (VSV G) (via cytoplasmic tail). Post-translationally, phosphorylation at Tyr-223 enhances binding to chaperone HSP90AA1. In terms of tissue distribution, expressed in numerous tissues, including brain, heart, skeletal muscle and kidney and, at lower levels, liver and placenta.

It localises to the cytoplasm. The protein resides in the cytosol. Its subcellular location is the endoplasmic reticulum. In terms of biological role, acts as a co-chaperone of HSP90AA1. Activates the ATPase activity of HSP90AA1 leading to increase in its chaperone activity. Competes with the inhibitory co-chaperone FNIP1 for binding to HSP90AA1, thereby providing a reciprocal regulatory mechanism for chaperoning of client proteins. Competes with the inhibitory co-chaperone TSC1 for binding to HSP90AA1, thereby providing a reciprocal regulatory mechanism for chaperoning of client proteins. This is Activator of 90 kDa heat shock protein ATPase homolog 1 (AHSA1) from Homo sapiens (Human).